A 739-amino-acid chain; its full sequence is Cellulose synthase catalytic subunit [UDP-forming] (739 aa).

A run of 4 helical transmembrane segments spans residues 36 to 55, 59 to 76, 83 to 101, and 116 to 138; these read VLVV…IISA, LYSQ…VLVL, LAIL…RYMF, and MFFG…FGYV. The interval 157-250 is catalytic subdomain A; sequence EWPTVDVFIP…YIALFDADHV (94 aa). Asp-199 is an active-site residue. Substrate is bound by residues Asp-246 and Asp-248. Positions 327–387 are catalytic subdomain B; it reads EPLLEIGGVA…NQRIRWARGM (61 aa). Asp-343 is a catalytic residue. 4 helical membrane passes run 417–436, 440–462, 524–546, and 551–573; these read FFYG…YLIF, IFHA…SSLT, PYLV…LIWG, and AVTV…AAVA. In terms of domain architecture, PilZ spans 580-677; the sequence is QVRSEPRVSA…QSELVRLTFS (98 aa).

Belongs to the glycosyltransferase 2 family. The cofactor is Mg(2+).

The protein resides in the cell inner membrane. It catalyses the reaction [(1-&gt;4)-beta-D-glucosyl](n) + UDP-alpha-D-glucose = [(1-&gt;4)-beta-D-glucosyl](n+1) + UDP + H(+). It participates in glycan metabolism; bacterial cellulose biosynthesis. With respect to regulation, activated by bis-(3'-5') cyclic diguanylic acid (c-di-GMP). Its function is as follows. Catalytic subunit of cellulose synthase. It polymerizes uridine 5'-diphosphate glucose to cellulose, which is produced as an extracellular component responsible for the structural integrity and rigidity of self-supporting mats characteristic of the 'wrinkly spreader' phenotype. The chain is Cellulose synthase catalytic subunit [UDP-forming] (bcsA) from Pseudomonas fluorescens (strain SBW25).